Here is a 564-residue protein sequence, read N- to C-terminus: MLWAIVLLGYLLFVVEWFVIDRIAGKPAGILDSNTKVLPNYDGWVNSFFANSAGSIAGSATNWSITLLRAVGSVLCGIVVLKFGYRYAVMIMMGLMCLCFPFLIIGDPLGGNNQLTLLRPLSKEVMGKLSSLSSQLHEGQLLGPVMAEGKTMLADGQTIDLVQGLDKNLIGTSSSIAGYALFIIFRSTIAIGGTTLVTYSQPLIASLSTQRRKSVLSNANLWGFNSGIVVAFVPFLFQSVQQAGTKYWVFILTALILIGFGILCVFAWFEKQMDPFMPQKQTKEQMQLGNQPSAGDILKRKATWKMIGMYGICLVVLVNPLTGGWWNILQAVSPASSFNVKDGVKTLKPLEGAGGYFAGLPTLAILWVLGYGMGYMVFSPFNKTVYDRKRWLSFMFFMNALMVIVIVLFAATLGVGTAVGFAFVAIATFIGGSFAWSMQSTILILPHEFKEYKRSEVSVLFGYIWGFGYVIYTAFDITNSMFLEAPKLANPGMKGVSILPGAIAGVALFAGLLLAAIAIVVTLPSSYLKNGDELVSEMTKKWKLNQWQFLVASKEKNRYADLLK.

Helical transmembrane passes span 1–21 (MLWA…FVID), 65–85 (ITLL…KFGY), 89–109 (VMIM…GDPL), 176–196 (IAGY…GTTL), 220–240 (NLWG…FQSV), 249–269 (VFIL…FAWF), 306–326 (MIGM…GGWW), 358–378 (AGLP…YMVF), 404–424 (IVIV…FAFV), 425–445 (AIAT…ILIL), 457–477 (VSVL…AFDI), and 501–521 (GAIA…AIVV).

This sequence belongs to the major facilitator superfamily.

Its subcellular location is the cell membrane. The polypeptide is Major facilitator superfamily transporter MPN_076 (Mycoplasma pneumoniae (strain ATCC 29342 / M129 / Subtype 1) (Mycoplasmoides pneumoniae)).